Here is a 1170-residue protein sequence, read N- to C-terminus: Anion exchange protein 3 (1170 aa).

The Cytoplasmic portion of the chain corresponds to 1-656 (MGRSYNEKDF…DLKDALDTQC (656 aa)). Disordered stretches follow at residues 17-96 (FHHT…PQLS), 112-167 (FHME…TTRG), and 239-267 (HLVK…RRKR). Positions 32–53 (RFRKRVLSMDRRRKRKRKKKKT) are enriched in basic residues. Residues 67–76 (VDEEEAESEI) are compositionally biased toward acidic residues. The segment covering 246–259 (RCQLPRSSNGSPPL) has biased composition (polar residues). 5 helical membrane-spanning segments follow: residues 657–677 (IAAV…FGGL), 702–722 (FSLL…LLVF), 744–764 (IGFW…SFLV), 774–794 (IFAF…LIKV), and 828–848 (PNTA…AFFL). The interval 657–1170 (IAAVIFIYFA…DEYNEIHMLV (514 aa)) is membrane (anion exchange). The Cytoplasmic portion of the chain corresponds to 849-863 (RKLRNSRFLGGKVRR). 5 helical membrane-spanning segments follow: residues 864–884 (VIGD…DILI), 919–939 (FPVW…ILIF), 966–986 (LLLI…WLTA), 1020–1063 (RVTG…LTGI), and 1104–1124 (IVLL…FILI).

This sequence belongs to the anion exchanger (TC 2.A.31) family. In terms of tissue distribution, widely expressed at low levels.

The protein localises to the cell membrane. The enzyme catalyses hydrogencarbonate(in) + chloride(out) = hydrogencarbonate(out) + chloride(in). Sodium-independent anion exchanger which mediates the electroneutral exchange of chloride for bicarbonate ions across the cell membrane. May be involved in the regulation of intracellular pH, and the modulation of cardiac action potential. The sequence is that of Anion exchange protein 3 from Danio rerio (Zebrafish).